The sequence spans 238 residues: Ribonuclease PH (238 aa).

Residues Arg-86 and 124 to 126 (GTR) contribute to the phosphate site.

The protein belongs to the RNase PH family. In terms of assembly, homohexameric ring arranged as a trimer of dimers.

The catalysed reaction is tRNA(n+1) + phosphate = tRNA(n) + a ribonucleoside 5'-diphosphate. In terms of biological role, phosphorolytic 3'-5' exoribonuclease that plays an important role in tRNA 3'-end maturation. Removes nucleotide residues following the 3'-CCA terminus of tRNAs; can also add nucleotides to the ends of RNA molecules by using nucleoside diphosphates as substrates, but this may not be physiologically important. Probably plays a role in initiation of 16S rRNA degradation (leading to ribosome degradation) during starvation. This is Ribonuclease PH from Rhizorhabdus wittichii (strain DSM 6014 / CCUG 31198 / JCM 15750 / NBRC 105917 / EY 4224 / RW1) (Sphingomonas wittichii).